The chain runs to 834 residues: Ras GTPase-activating protein 3 (834 aa).

2 C2 domains span residues 1–112 and 123–263; these read MAVE…DTWF and VQGK…EAWY. At Ala2 the chain carries N-acetylalanine. A Phosphotyrosine modification is found at Tyr66. Ser77 bears the Phosphoserine mark. Thr110 carries the phosphothreonine modification. The 216-residue stretch at 346 to 561 folds into the Ras-GAP domain; sequence GRVVPFISAI…DAVKNFLDLI (216 aa). Positions 576 to 677 constitute a PH domain; that stretch reads ILLKEGFMIK…WIDILTKVSQ (102 aa). The segment at 679–715 adopts a Btk-type zinc-finger fold; the sequence is NQKRLTVFHPSAYLNGHWLCCRASSDTAAGCTPCTGG. Zn(2+) contacts are provided by His687, Cys698, Cys699, and Cys709. Phosphoserine is present on residues Ser809 and Ser833.

As to expression, high levels in brain, lower in spleen and lung.

In terms of biological role, inhibitory regulator of the Ras-cyclic AMP pathway. May bind inositol tetrakisphosphate (IP4). This chain is Ras GTPase-activating protein 3 (Rasa3), found in Mus musculus (Mouse).